Consider the following 252-residue polypeptide: Osmotin-like protein (252 aa).

A signal peptide spans 1-24 (MASSSAKILLPLSLLFTLLSLSQS).

The protein localises to the secreted. It is found in the cell wall. This is Osmotin-like protein from Solanum lycopersicum (Tomato).